We begin with the raw amino-acid sequence, 351 residues long: Transaldolase (351 aa).

Residue lysine 138 is the Schiff-base intermediate with substrate of the active site.

It belongs to the transaldolase family. Type 2 subfamily.

The protein localises to the cytoplasm. It catalyses the reaction D-sedoheptulose 7-phosphate + D-glyceraldehyde 3-phosphate = D-erythrose 4-phosphate + beta-D-fructose 6-phosphate. The protein operates within carbohydrate degradation; pentose phosphate pathway; D-glyceraldehyde 3-phosphate and beta-D-fructose 6-phosphate from D-ribose 5-phosphate and D-xylulose 5-phosphate (non-oxidative stage): step 2/3. Functionally, transaldolase is important for the balance of metabolites in the pentose-phosphate pathway. This chain is Transaldolase, found in Neisseria meningitidis serogroup C / serotype 2a (strain ATCC 700532 / DSM 15464 / FAM18).